The following is a 341-amino-acid chain: GTPase Obg (341 aa).

The region spanning 2–160 is the Obg domain; sequence SGFIDEVPIQ…FSLILELKLL (159 aa). The OBG-type G domain maps to 161–330; the sequence is ADIGIVGLPN…LLERIDKVFF (170 aa). GTP contacts are provided by residues 167 to 174, 192 to 196, 215 to 218, 282 to 285, and 311 to 313; these read GLPNAGKS, FTTLS, DIPG, NKMD, and SAD. Residues Ser-174 and Thr-194 each coordinate Mg(2+).

This sequence belongs to the TRAFAC class OBG-HflX-like GTPase superfamily. OBG GTPase family. In terms of assembly, monomer. Mg(2+) is required as a cofactor.

The protein resides in the cytoplasm. In terms of biological role, an essential GTPase which binds GTP, GDP and possibly (p)ppGpp with moderate affinity, with high nucleotide exchange rates and a fairly low GTP hydrolysis rate. Plays a role in control of the cell cycle, stress response, ribosome biogenesis and in those bacteria that undergo differentiation, in morphogenesis control. This Leptospira biflexa serovar Patoc (strain Patoc 1 / Ames) protein is GTPase Obg.